The following is a 549-amino-acid chain: Hydroxylamine reductase (549 aa).

Residues cysteine 3, cysteine 6, cysteine 15, and cysteine 21 each coordinate [4Fe-4S] cluster. Residues histidine 244, glutamate 268, cysteine 313, cysteine 405, cysteine 433, cysteine 458, glutamate 492, and lysine 494 each coordinate hybrid [4Fe-2O-2S] cluster. A Cysteine persulfide modification is found at cysteine 405.

The protein belongs to the HCP family. The cofactor is [4Fe-4S] cluster. Hybrid [4Fe-2O-2S] cluster serves as cofactor.

Its subcellular location is the cytoplasm. The catalysed reaction is A + NH4(+) + H2O = hydroxylamine + AH2 + H(+). Catalyzes the reduction of hydroxylamine to form NH(3) and H(2)O. The polypeptide is Hydroxylamine reductase (Gloeothece citriformis (strain PCC 7424) (Cyanothece sp. (strain PCC 7424))).